Consider the following 198-residue polypeptide: Transcriptional regulator GfcR (198 aa).

Belongs to the purine/pyrimidine phosphoribosyltransferase family. GfcR subfamily.

This is Transcriptional regulator GfcR from Methanosphaera stadtmanae (strain ATCC 43021 / DSM 3091 / JCM 11832 / MCB-3).